Consider the following 119-residue polypeptide: Flagellar transcriptional regulator FlhD (119 aa).

Belongs to the FlhD family. Homodimer; disulfide-linked. Forms a heterohexamer composed of two FlhC and four FlhD subunits. Each FlhC binds a FlhD dimer, forming a heterotrimer, and a hexamer assembles by dimerization of two heterotrimers.

The protein resides in the cytoplasm. Functions in complex with FlhC as a master transcriptional regulator that regulates transcription of several flagellar and non-flagellar operons by binding to their promoter region. Activates expression of class 2 flagellar genes, including fliA, which is a flagellum-specific sigma factor that turns on the class 3 genes. Also regulates genes whose products function in a variety of physiological pathways. The chain is Flagellar transcriptional regulator FlhD from Serratia marcescens.